We begin with the raw amino-acid sequence, 284 residues long: RNase adapter protein RapZ (284 aa).

8-15 (GRSGSGKS) is a binding site for ATP. 56-59 (DVRN) provides a ligand contact to GTP. The segment at 266–284 (RSRGKNVQSRHRTLEKRKT) is RNA-binding.

Belongs to the RapZ-like family. RapZ subfamily. Homotrimer.

Functionally, modulates the synthesis of GlmS, by affecting the processing and stability of the regulatory small RNA GlmZ. When glucosamine-6-phosphate (GlcN6P) concentrations are high in the cell, RapZ binds GlmZ and targets it to cleavage by RNase E. Consequently, GlmZ is inactivated and unable to activate GlmS synthesis. Under low GlcN6P concentrations, RapZ is sequestered and inactivated by an other regulatory small RNA, GlmY, preventing GlmZ degradation and leading to synthesis of GlmS. The polypeptide is RNase adapter protein RapZ (Citrobacter koseri (strain ATCC BAA-895 / CDC 4225-83 / SGSC4696)).